The following is a 154-amino-acid chain: MGLSDGEWQLVLNVWGKVEADIPSHGQEVLISLFKGHPETLEKFDKFKHLKSEDEMKASEELKKHGATVLTALGGILKKKGQHEAELKPLAQSHATKHKIPVKYLEFISDAIVHVLQKKHPGDFGADAQGAMKKALELFRNDMAAKYKELGFQG.

The 147-residue stretch at 2–148 (GLSDGEWQLV…FRNDMAAKYK (147 aa)) folds into the Globin domain. Serine 4 is modified (phosphoserine). Histidine 65 serves as a coordination point for nitrite. Histidine 65 lines the O2 pocket. Threonine 68 carries the post-translational modification Phosphothreonine. Histidine 94 is a binding site for heme b.

This sequence belongs to the globin family. In terms of assembly, monomeric.

The protein resides in the cytoplasm. It is found in the sarcoplasm. The catalysed reaction is Fe(III)-heme b-[protein] + nitric oxide + H2O = Fe(II)-heme b-[protein] + nitrite + 2 H(+). It catalyses the reaction H2O2 + AH2 = A + 2 H2O. Its function is as follows. Monomeric heme protein which primary function is to store oxygen and facilitate its diffusion within muscle tissues. Reversibly binds oxygen through a pentacoordinated heme iron and enables its timely and efficient release as needed during periods of heightened demand. Depending on the oxidative conditions of tissues and cells, and in addition to its ability to bind oxygen, it also has a nitrite reductase activity whereby it regulates the production of bioactive nitric oxide. Under stress conditions, like hypoxia and anoxia, it also protects cells against reactive oxygen species thanks to its pseudoperoxidase activity. This chain is Myoglobin (MB), found in Sapajus apella (Brown-capped capuchin).